The primary structure comprises 143 residues: Large ribosomal subunit protein uL11 (143 aa).

This sequence belongs to the universal ribosomal protein uL11 family. Part of the ribosomal stalk of the 50S ribosomal subunit. Interacts with L10 and the large rRNA to form the base of the stalk. L10 forms an elongated spine to which L12 dimers bind in a sequential fashion forming a multimeric L10(L12)X complex. Post-translationally, one or more lysine residues are methylated.

In terms of biological role, forms part of the ribosomal stalk which helps the ribosome interact with GTP-bound translation factors. In Nitrosomonas europaea (strain ATCC 19718 / CIP 103999 / KCTC 2705 / NBRC 14298), this protein is Large ribosomal subunit protein uL11.